Reading from the N-terminus, the 654-residue chain is Probable protein phosphatase 2C 23 (654 aa).

Residues 11-30 are disordered; it reads CLTGGAGRNKKPELSILEPD. Serine 147 bears the Phosphoserine mark. Positions 243 to 645 constitute a PPM-type phosphatase domain; that stretch reads DVSLESQNLQ…DDVSIVVISL (403 aa). Mn(2+) is bound by residues aspartate 280 and glycine 281. The disordered stretch occupies residues 309–336; sequence DDPKTDAKSSDEADVENRDSSSEKKSKN. Residues aspartate 573 and aspartate 636 each contribute to the Mn(2+) site.

This sequence belongs to the PP2C family. Mg(2+) is required as a cofactor. Mn(2+) serves as cofactor. As to expression, expressed in seedlings, roots, leaves, stems, young inflorescences, flowers and siliques.

Its subcellular location is the nucleus. The enzyme catalyses O-phospho-L-seryl-[protein] + H2O = L-seryl-[protein] + phosphate. It carries out the reaction O-phospho-L-threonyl-[protein] + H2O = L-threonyl-[protein] + phosphate. Functionally, involved in leaf development regulation. The protein is Probable protein phosphatase 2C 23 (PLL4) of Arabidopsis thaliana (Mouse-ear cress).